A 95-amino-acid chain; its full sequence is Small ribosomal subunit protein bS18 (95 aa).

This sequence belongs to the bacterial ribosomal protein bS18 family. Part of the 30S ribosomal subunit. Forms a tight heterodimer with protein bS6.

In terms of biological role, binds as a heterodimer with protein bS6 to the central domain of the 16S rRNA, where it helps stabilize the platform of the 30S subunit. The sequence is that of Small ribosomal subunit protein bS18 from Rickettsia felis (strain ATCC VR-1525 / URRWXCal2) (Rickettsia azadi).